We begin with the raw amino-acid sequence, 656 residues long: MVFKSRIKWIALFVLILSMGSLVVHLSMTKSSGVQLAYSARDNLWQDFDSLLGAQDFRNKHLWRPVKSLETLQPYANPRNSYPAPSSKNNGFIYAKIFGGFDKIRSSICDLVTISRLLNATLVIPELQESLRSKGISNKFKSFSYLYDEEQFIAFLKNDVIVMKTLPESLKAARKRNEFPLFKPKNSASPKFYLEDVLPKLKKANVIGLIVSDGGCLQSALPASMPELQRLRCRVAFHALQLRPEIQVLAKEMVDRLRKSGQPFLAYHPGLVREKLAYHGCAELFQDIHSELIQYRRAQMIKQRFILEELIVDSRLRRDNGLCPLMPEEVGILLKALGYSQKAIIYLAGSEIFGGQRVLIPLRAMFPNLVDRTSLCSTEELSELVGPETPLPENTYKMPPRKSDKQLKEEWNKAGPRPRPLPPPPDRPIYQHEKEGWYGWLTENDTEPSPSPMDLRNQAHRLLWDALDFAVSVEADVFFPGFNNDGSGWPDFSSLVMGQRLYERPSSRTYRLDRKVIQELFNITREDMYHPNRNWTLRVRKHLNSSLGESGLIRQSMLSKPRSFLSHPLPECSCRTSALEDSRQIQSDDGRFLYGGEDECPKWIKSAGVEKSKTDDGDQPDYDHDLLAEQSETEEEFAKSKVASAFDQDEEWDPND.

The helical; Signal-anchor for type II membrane protein transmembrane segment at 9–29 threads the bilayer; that stretch reads WIALFVLILSMGSLVVHLSMT. Asparagine 119 is a glycosylation site (N-linked (GlcNAc...) asparagine). The disordered stretch occupies residues 381–426; it reads LSELVGPETPLPENTYKMPPRKSDKQLKEEWNKAGPRPRPLPPPPD. Basic and acidic residues predominate over residues 401-412; sequence RKSDKQLKEEWN. A compositionally biased stretch (pro residues) spans 417–426; it reads RPRPLPPPPD. 4 N-linked (GlcNAc...) asparagine glycosylation sites follow: asparagine 444, asparagine 522, asparagine 534, and asparagine 544. The tract at residues 631–656 is disordered; the sequence is SETEEEFAKSKVASAFDQDEEWDPND. Positions 647-656 are enriched in acidic residues; that stretch reads DQDEEWDPND.

This sequence belongs to the glycosyltransferase GT106 family.

It is found in the membrane. The protein operates within glycan metabolism. The protein is Protein EMBRYO SAC DEVELOPMENT ARREST 30 of Arabidopsis thaliana (Mouse-ear cress).